A 986-amino-acid polypeptide reads, in one-letter code: Ankyrin repeat, PH and SEC7 domain containing protein secG (986 aa).

The segment covering 1–28 (MGSTSNSTKNTGSTTTTTTTAAPATTAK) has biased composition (low complexity). Residues 1 to 43 (MGSTSNSTKNTGSTTTTTTTAAPATTAKHSNSAPTRPSVHYYS) form a disordered region. The segment covering 29–43 (HSNSAPTRPSVHYYS) has biased composition (polar residues). ANK repeat units follow at residues 34–63 (PTRP…TSPD), 68–97 (EKRT…NANI), 101–131 (AGNT…DVNT), 135–164 (KNGT…DPRA), 168–197 (NGET…KVNA), 201–230 (DCIT…KVDP), 234–263 (HGIS…NINC), 267–296 (EGVT…KINM), 300–329 (MGET…TMID), 334–363 (RQST…QINI), 367–396 (EGAT…PICI), 400–429 (QGAT…ELEV), 433–462 (QGGT…NVNA), 466–495 (HSST…RIDA), and 499–528 (AGKT…DLDQ). The region spanning 580–770 (QLAAEKQKLL…ENLYDKIVTN (191 aa)) is the SEC7 domain. The PH domain occupies 784 to 895 (HVEKKGWLTK…WVQSIKSNIH (112 aa)). The interval 911-986 (IRGRGKVSTK…PVQQQTSALS (76 aa)) is disordered. The span at 920–929 (KPIQNRKQTI) shows a compositional bias: polar residues. 2 stretches are compositionally biased toward low complexity: residues 936 to 953 (TTTT…SVGS) and 963 to 986 (SSGS…SALS).

The chain is Ankyrin repeat, PH and SEC7 domain containing protein secG (secG) from Dictyostelium discoideum (Social amoeba).